A 100-amino-acid chain; its full sequence is Aspartyl/glutamyl-tRNA(Asn/Gln) amidotransferase subunit C (100 aa).

Belongs to the GatC family. As to quaternary structure, heterotrimer of A, B and C subunits.

It catalyses the reaction L-glutamyl-tRNA(Gln) + L-glutamine + ATP + H2O = L-glutaminyl-tRNA(Gln) + L-glutamate + ADP + phosphate + H(+). The enzyme catalyses L-aspartyl-tRNA(Asn) + L-glutamine + ATP + H2O = L-asparaginyl-tRNA(Asn) + L-glutamate + ADP + phosphate + 2 H(+). Allows the formation of correctly charged Asn-tRNA(Asn) or Gln-tRNA(Gln) through the transamidation of misacylated Asp-tRNA(Asn) or Glu-tRNA(Gln) in organisms which lack either or both of asparaginyl-tRNA or glutaminyl-tRNA synthetases. The reaction takes place in the presence of glutamine and ATP through an activated phospho-Asp-tRNA(Asn) or phospho-Glu-tRNA(Gln). The sequence is that of Aspartyl/glutamyl-tRNA(Asn/Gln) amidotransferase subunit C from Herminiimonas arsenicoxydans.